Reading from the N-terminus, the 636-residue chain is MSVGETTSAPPTPAPDSDVITSTFSLVDYVVFSLLLVFSLAIGLYHACRGWGKHTVGQLLLADRRMGCLPVALSLLATFQSAVAILGVPSEIYRFGTQYWFLGCCYFLGLLIPAHVFIPVFYRLHLTSAYEYLELRFNKVVRICGTVTFIFQMVIYMGVVLYAPSLALNAVTGFDLWLSVLTLGIVCTIYTALGGLKAVIWTDVFQTLVMFLGQLAVIIVGSAKVGGLGRVWDVASQHGLISGIELDPDPFVRHTFWTLAFGGVFMMLSLYGVNQAQVQRYLSSRTEKAAVLSCYAVFPCQQVALSMGCLIGLVMFAYYQEYPMSTQQSQAASDQFVLYFVMDLLKGLPGLPGLFVACLFSGSLSTISSAFNSLATVTMEDLIRPWFPECSEAQAIMLSRSLAFGYGLLCLGMAYISSQMGPVLQAAISIFGMVGGPLLGLFCLGMFFPCANPPGAIVGLLAGLIMAFWIGIGSIVTSMGSGLAPSPPNGSSFSLPSNLTIATVTTLMPSTSLSKPTGLQRLYSLSYLWYSAHNSTTVIVVGLIVSLLTGGMRGRPPNPRTIYPVLPKLLALLPLSWQKRLHCTSHCQDLPVDTELFPEKMRNGALRASGDKEPMTEASPVHQGTSPTFILHETSL.

12 helical membrane passes run 24–44 (FSLV…AIGL), 68–88 (CLPV…ILGV), 101–121 (FLGC…IPVF), 143–163 (ICGT…VLYA), 176–196 (LWLS…LGGL), 199–219 (VIWT…AVII), 256–276 (FWTL…VNQA), 297–317 (VFPC…VMFA), 336–356 (FVLY…GLFV), 404–424 (FGYG…GPVL), 428–448 (ISIF…GMFF), and 456–476 (AIVG…GSIV). N-linked (GlcNAc...) asparagine glycans are attached at residues asparagine 489 and asparagine 498. Residues 528–548 (LWYSAHNSTTVIVVGLIVSLL) traverse the membrane as a helical segment. The disordered stretch occupies residues 606 to 627 (LRASGDKEPMTEASPVHQGTSP).

Belongs to the sodium:solute symporter (SSF) (TC 2.A.21) family. As to quaternary structure, interacts with PDZD11.

The protein localises to the cell membrane. It localises to the apical cell membrane. The catalysed reaction is biotin(out) + 2 Na(+)(out) = biotin(in) + 2 Na(+)(in). It carries out the reaction (R)-pantothenate(out) + 2 Na(+)(out) = (R)-pantothenate(in) + 2 Na(+)(in). The enzyme catalyses (R)-lipoate(out) + 2 Na(+)(out) = (R)-lipoate(in) + 2 Na(+)(in). It catalyses the reaction iodide(out) + 2 Na(+)(out) = iodide(in) + 2 Na(+)(in). Its function is as follows. Sodium-dependent multivitamin transporter that mediates the electrogenic transport of pantothenate, biotin, lipoate and iodide. Functions as a Na(+)-coupled substrate symporter where the stoichiometry of Na(+):substrate is 2:1, creating an electrochemical Na(+) gradient used as driving force for substrate uptake. Required for biotin and pantothenate uptake in the intestine across the brush border membrane. Plays a role in the maintenance of intestinal mucosa integrity, by providing the gut mucosa with biotin. Contributes to the luminal uptake of biotin and pantothenate into the brain across the blood-brain barrier. In Oryctolagus cuniculus (Rabbit), this protein is Sodium-dependent multivitamin transporter (SLC5A6).